The following is a 152-amino-acid chain: Ribonuclease HI (152 aa).

The region spanning 1 to 142 (MDSKVVIYTD…ADKLAVQGRE (142 aa)) is the RNase H type-1 domain. The Mg(2+) site is built by aspartate 10, glutamate 48, aspartate 70, and aspartate 134.

The protein belongs to the RNase H family. In terms of assembly, monomer. It depends on Mg(2+) as a cofactor.

The protein localises to the cytoplasm. It catalyses the reaction Endonucleolytic cleavage to 5'-phosphomonoester.. Its function is as follows. Endonuclease that specifically degrades the RNA of RNA-DNA hybrids. This is Ribonuclease HI from Rickettsia conorii (strain ATCC VR-613 / Malish 7).